The primary structure comprises 1116 residues: DUB-associated factor 1 (1116 aa).

WD repeat units lie at residues 21 to 62 (AHIL…NEPE), 91 to 132 (KNSD…DHDD), 160 to 200 (VHDG…EKMA), 219 to 262 (SMSP…EVIR), 266 to 305 (AHRTNIKVVRTLDDSTRLISTSSDGVINVWDLNCRHDQTT), 387 to 426 (KKYGGILDIALLPNEKLLFSFCTDSNLNVLDLTNNHFSVN), and 428 to 466 (GGFALTRSSLLTNRRHVITENTKGQMQRWDIVSCELLNT). The segment at 578–600 (LDTGYNSESKKNNKDKKRKSTFK) is disordered. At S668 the chain carries Phosphoserine. Residue T693 is modified to Phosphothreonine. The span at 747–776 (ISSQDLPSNNTHNKLRSSENSRANSTSTLE) shows a compositional bias: polar residues. Disordered stretches follow at residues 747 to 784 (ISSQDLPSNNTHNKLRSSENSRANSTSTLEGNEKKKPE) and 963 to 994 (FISASDTTESSGNDSSDSSLGNGNEAVSPSTQ). Residues 967-987 (SDTTESSGNDSSDSSLGNGNE) are compositionally biased toward low complexity.

As to quaternary structure, interacts (via its WD repeats) with ubiquitin.

It is found in the cytoplasm. Functionally, ubiquitin-binding protein involved in the resistance to phenanthroline, sanguinarine, nordihydroguaiaretic acid (NDGA), isopropyl (N-3-chloro-phenyl)-carbamate (IPCPC) and guanosine 5'-O-(2-thiodiphosphate). This is DUB-associated factor 1 from Saccharomyces cerevisiae (strain ATCC 204508 / S288c) (Baker's yeast).